We begin with the raw amino-acid sequence, 539 residues long: Chaperonin GroEL (539 aa).

ATP-binding positions include 29 to 32 (TLGP), 86 to 90 (DGTTT), glycine 413, 477 to 479 (DAL), and aspartate 493.

It belongs to the chaperonin (HSP60) family. Forms a cylinder of 14 subunits composed of two heptameric rings stacked back-to-back. Interacts with the co-chaperonin GroES.

The protein localises to the cytoplasm. The enzyme catalyses ATP + H2O + a folded polypeptide = ADP + phosphate + an unfolded polypeptide.. Together with its co-chaperonin GroES, plays an essential role in assisting protein folding. The GroEL-GroES system forms a nano-cage that allows encapsulation of the non-native substrate proteins and provides a physical environment optimized to promote and accelerate protein folding. In Clostridium perfringens (strain 13 / Type A), this protein is Chaperonin GroEL.